The sequence spans 507 residues: Alkyl hydroperoxide reductase subunit F (507 aa).

207–222 contributes to the FAD binding site; the sequence is DVLIVGGGPASGSAAI. Cysteines 335 and 338 form a disulfide. 347–361 contacts NAD(+); sequence DVAVIGGGNSGVEAA. 467-477 contacts FAD; that stretch reads TNVPGIFAAGD.

Belongs to the class-II pyridine nucleotide-disulfide oxidoreductase family. In terms of assembly, homodimer. FAD is required as a cofactor.

Serves to protect the cell against DNA damage by alkyl hydroperoxides. It can use either NADH or NADPH as electron donor for direct reduction of redox dyes or of alkyl hydroperoxides when combined with the AhpC protein. The sequence is that of Alkyl hydroperoxide reductase subunit F (ahpF) from Staphylococcus aureus (strain MSSA476).